A 694-amino-acid polypeptide reads, in one-letter code: Nuclear factor erythroid 2-related factor 3 (694 aa).

The segment covering 133–150 (ASSTGGAGASVDGGSQAV) has biased composition (low complexity). 2 disordered regions span residues 133–256 (ASST…LNGT) and 330–357 (DPTA…QTLP). 2 stretches are compositionally biased toward basic and acidic residues: residues 193 to 217 (GVLR…RVSA) and 231 to 254 (NKIA…RHLN). Positions 333–357 (ARTSQSQEPFLQLNSHTTNPEQTLP) are enriched in polar residues. Residues 578–641 (LIRDIRRRGK…NIMKQKLHDL (64 aa)) form the bZIP domain. Residues 580–599 (RDIRRRGKNKVAAQNCRKRK) form a basic motif region. Residues 606 to 620 (LEDDVCNLQAKKETL) form a leucine-zipper region.

This sequence belongs to the bZIP family. CNC subfamily. Heterodimer with MAFG, MAFK and other small MAF proteins that binds to the MAF recognition elements (MARE). Highly expressed in human placenta and also in B-cell and monocyte cell lines. Low expression in heart, brain, lung, skeletal muscle, kidney and pancreas.

It localises to the nucleus. Functionally, activates erythroid-specific, globin gene expression. This chain is Nuclear factor erythroid 2-related factor 3 (NFE2L3), found in Homo sapiens (Human).